A 272-amino-acid polypeptide reads, in one-letter code: MCTTAWATAQPVIKPPKGRIAIIADGNSPDPDDLGGTAISLALLRATSLESRLVHYSHSCDLVRVNRISEAAEYERHAMMQTACDGTARRWGGFENLTFFDAKWQLDETIKDLSKAINASSAEDPLWIIEAGEPDIIGFALAASEKEKHQYVKVVTHHPANDDAGDFYTWQSILDFGVEEVRIPDQNINLKVDESEWDWAKNHSDDRMKFVWLMGKMAEVDDVVKFQKGKWDCSDAGMVLYWITGATNGGVKQGSVTQVKTILEGFLSQNNN.

Its subcellular location is the periplasm. In terms of biological role, may be involved in ulvan degradation. Ulvan is the main polysaccharide component of the Ulvales (green seaweed) cell wall. It is composed of disaccharide building blocks comprising 3-sulfated rhamnose (Rha3S) linked to D-glucuronic acid (GlcA), L-iduronic acid (IduA), or D-xylose (Xyl). This is an uncharacterized protein from Formosa agariphila (strain DSM 15362 / KCTC 12365 / LMG 23005 / KMM 3901 / M-2Alg 35-1).